The sequence spans 198 residues: dCTP deaminase (198 aa).

DCTP is bound by residues 110–115 (RSSLAR), D128, 136–138 (VLE), Y171, K178, and Q182. Residue E138 is the Proton donor/acceptor of the active site. A disordered region spans residues 168-198 (ARPYNKREDAKYRDQKGAVASRISQDEKVNK). The segment covering 172–183 (NKREDAKYRDQK) has biased composition (basic and acidic residues).

Belongs to the dCTP deaminase family. Homotrimer.

It catalyses the reaction dCTP + H2O + H(+) = dUTP + NH4(+). Its pathway is pyrimidine metabolism; dUMP biosynthesis; dUMP from dCTP (dUTP route): step 1/2. Its function is as follows. Catalyzes the deamination of dCTP to dUTP. The polypeptide is dCTP deaminase (Colwellia psychrerythraea (strain 34H / ATCC BAA-681) (Vibrio psychroerythus)).